The primary structure comprises 596 residues: Probable translation initiation factor IF-2 (596 aa).

The region spanning isoleucine 3–leucine 220 is the tr-type G domain. The segment at glycine 12–threonine 19 is G1. Position 12–19 (glycine 12–threonine 19) interacts with GTP. Positions glycine 37–histidine 41 are G2. A G3 region spans residues aspartate 76–glycine 79. GTP contacts are provided by residues aspartate 76–histidine 80 and asparagine 130–aspartate 133. The G4 stretch occupies residues asparagine 130–aspartate 133. Positions serine 198 to lysine 200 are G5.

It belongs to the TRAFAC class translation factor GTPase superfamily. Classic translation factor GTPase family. IF-2 subfamily.

Functionally, function in general translation initiation by promoting the binding of the formylmethionine-tRNA to ribosomes. Seems to function along with eIF-2. The chain is Probable translation initiation factor IF-2 from Methanobrevibacter smithii (strain ATCC 35061 / DSM 861 / OCM 144 / PS).